Here is a 341-residue protein sequence, read N- to C-terminus: Methionine import ATP-binding protein MetN 1 (341 aa).

One can recognise an ABC transporter domain in the interval 2–241 (IEFRQVSKSF…PKTTIAQNFV (240 aa)). Residue 38–45 (GYSGAGKS) coordinates ATP.

This sequence belongs to the ABC transporter superfamily. Methionine importer (TC 3.A.1.24) family. In terms of assembly, the complex is composed of two ATP-binding proteins (MetN), two transmembrane proteins (MetI) and a solute-binding protein (MetQ).

It is found in the cell membrane. The enzyme catalyses L-methionine(out) + ATP + H2O = L-methionine(in) + ADP + phosphate + H(+). It catalyses the reaction D-methionine(out) + ATP + H2O = D-methionine(in) + ADP + phosphate + H(+). Its function is as follows. Part of the ABC transporter complex MetNIQ involved in methionine import. Responsible for energy coupling to the transport system. The sequence is that of Methionine import ATP-binding protein MetN 1 from Staphylococcus aureus (strain bovine RF122 / ET3-1).